The following is a 102-amino-acid chain: UPF0251 protein ASA_1331 (102 aa).

The protein belongs to the UPF0251 family.

The chain is UPF0251 protein ASA_1331 from Aeromonas salmonicida (strain A449).